We begin with the raw amino-acid sequence, 243 residues long: Small ribosomal subunit protein uS5 (243 aa).

The span at 1–10 (MSDNETKETQ) shows a compositional bias: basic and acidic residues. The tract at residues 1 to 50 (MSDNETKETQVAEETQNTVATESNNEDRKGRRGQRGEGRRGERRNRREEN) is disordered. Residues 12–23 (AEETQNTVATES) are compositionally biased toward polar residues. Positions 25–50 (NEDRKGRRGQRGEGRRGERRNRREEN) are enriched in basic and acidic residues. An S5 DRBM domain is found at 55–118 (LLDRVVTINR…LDAKKHMFSV (64 aa)).

It belongs to the universal ribosomal protein uS5 family. In terms of assembly, part of the 30S ribosomal subunit. Contacts proteins S4 and S8.

Functionally, with S4 and S12 plays an important role in translational accuracy. In terms of biological role, located at the back of the 30S subunit body where it stabilizes the conformation of the head with respect to the body. The protein is Small ribosomal subunit protein uS5 of Bifidobacterium longum (strain DJO10A).